The following is a 344-amino-acid chain: Heat-inducible transcription repressor HrcA (344 aa).

It belongs to the HrcA family.

In terms of biological role, negative regulator of class I heat shock genes (grpE-dnaK-dnaJ and groELS operons). Prevents heat-shock induction of these operons. The polypeptide is Heat-inducible transcription repressor HrcA (Streptococcus uberis (strain ATCC BAA-854 / 0140J)).